Reading from the N-terminus, the 511-residue chain is 2,3-bisphosphoglycerate-independent phosphoglycerate mutase (511 aa).

Asp12 contributes to the Mn(2+) binding site. Tyr36 is subject to Phosphotyrosine. Ser62 contacts Mn(2+). Residue Ser62 is the Phosphoserine intermediate of the active site. Substrate contacts are provided by residues His123, 153 to 154 (RD), Arg185, Arg191, 261 to 264 (RPDR), and Lys336. 5 residues coordinate Mn(2+): Asp403, His407, Asp444, His445, and His462.

Belongs to the BPG-independent phosphoglycerate mutase family. In terms of assembly, monomer. It depends on Mn(2+) as a cofactor.

It catalyses the reaction (2R)-2-phosphoglycerate = (2R)-3-phosphoglycerate. It functions in the pathway carbohydrate degradation; glycolysis; pyruvate from D-glyceraldehyde 3-phosphate: step 3/5. Essential for rapid growth and for sporulation. Catalyzes the interconversion of 2-phosphoglycerate and 3-phosphoglycerate. The protein is 2,3-bisphosphoglycerate-independent phosphoglycerate mutase of Bacillus velezensis (strain DSM 23117 / BGSC 10A6 / LMG 26770 / FZB42) (Bacillus amyloliquefaciens subsp. plantarum).